The sequence spans 206 residues: High-affinity nitrate transporter-activating protein 2.1 (206 aa).

A signal peptide spans 1–27 (MARLAGVAALSLVLVLLGAGVPRPAAA). A helical transmembrane segment spans residues 180–200 (VAAGVFSTFSIAALAFFFVVE).

This sequence belongs to the NAR2 family. In terms of assembly, heterotetramer composed of two NRT2.1, NRT2.2 or NRT2.3 and two NAR2.1. Interacts with NRT2.1, NRT2.2 and isoform 1 of NRT2.3. As to expression, expressed in epidermal cells of primary and lateral roots, root-shoot junction zone, vascular tissues of adventitious root primordia, stems and coleoptiles of germinating seeds.

Its subcellular location is the cell membrane. In terms of biological role, acts as a dual component transporter with NTR2.1, NRT2.2 and NRT2.3. Required for high-affinity nitrate transport. Involved in the regulation of NRT2.1, NRT2.2 and NRT2.3 expression, and in both, HATS (high-affinity transport system) and LATS (low-affinity transport system) activities in plant roots. Imports nitrate with high affinity when expressed with NTR2.1, NTR2.2 or NTR2.3 in a heterologous system (Xenopus oocytes). This chain is High-affinity nitrate transporter-activating protein 2.1 (NAR2.1), found in Oryza sativa subsp. japonica (Rice).